The chain runs to 465 residues: Glutamate--tRNA ligase (465 aa).

The short motif at 8–18 is the 'HIGH' region element; that stretch reads PSPTGHLHIGG. Residues Cys97, Cys99, Cys124, and Glu126 each coordinate Zn(2+). The 'KMSKS' region motif lies at 234–238; that stretch reads RLSKR. Lys237 serves as a coordination point for ATP.

It belongs to the class-I aminoacyl-tRNA synthetase family. Glutamate--tRNA ligase type 1 subfamily. In terms of assembly, monomer. It depends on Zn(2+) as a cofactor.

It localises to the cytoplasm. The catalysed reaction is tRNA(Glu) + L-glutamate + ATP = L-glutamyl-tRNA(Glu) + AMP + diphosphate. In terms of biological role, catalyzes the attachment of glutamate to tRNA(Glu) in a two-step reaction: glutamate is first activated by ATP to form Glu-AMP and then transferred to the acceptor end of tRNA(Glu). In Thermodesulfovibrio yellowstonii (strain ATCC 51303 / DSM 11347 / YP87), this protein is Glutamate--tRNA ligase.